The chain runs to 408 residues: Arginine biosynthesis bifunctional protein ArgJ (408 aa).

Substrate contacts are provided by Thr-156, Lys-182, Thr-193, Glu-279, Asn-403, and Ser-408. Thr-193 functions as the Nucleophile in the catalytic mechanism.

Belongs to the ArgJ family. As to quaternary structure, heterotetramer of two alpha and two beta chains.

Its subcellular location is the cytoplasm. The enzyme catalyses N(2)-acetyl-L-ornithine + L-glutamate = N-acetyl-L-glutamate + L-ornithine. The catalysed reaction is L-glutamate + acetyl-CoA = N-acetyl-L-glutamate + CoA + H(+). It functions in the pathway amino-acid biosynthesis; L-arginine biosynthesis; L-ornithine and N-acetyl-L-glutamate from L-glutamate and N(2)-acetyl-L-ornithine (cyclic): step 1/1. It participates in amino-acid biosynthesis; L-arginine biosynthesis; N(2)-acetyl-L-ornithine from L-glutamate: step 1/4. In terms of biological role, catalyzes two activities which are involved in the cyclic version of arginine biosynthesis: the synthesis of N-acetylglutamate from glutamate and acetyl-CoA as the acetyl donor, and of ornithine by transacetylation between N(2)-acetylornithine and glutamate. The sequence is that of Arginine biosynthesis bifunctional protein ArgJ from Bordetella pertussis (strain Tohama I / ATCC BAA-589 / NCTC 13251).